The chain runs to 1486 residues: Chromosome partition protein MukB (1486 aa).

Residue 34–41 (GGNGAGKS) participates in ATP binding. Coiled coils occupy residues 326–418 (LEAD…QYNQ), 444–480 (LETF…QAYQ), and 509–603 (RHLA…RAPV). Positions 666–783 (PGGSEDQRLN…EVPLFGRAAR (118 aa)) are flexible hinge. Coiled-coil stretches lie at residues 835 to 923 (EAEI…AKLE), 977 to 1115 (EMLS…TAKA), and 1209 to 1266 (VEAI…QNVS).

Belongs to the SMC family. MukB subfamily. Homodimerization via its hinge domain. Binds to DNA via its C-terminal region. Interacts, and probably forms a ternary complex, with MukE and MukF via its C-terminal region. The complex formation is stimulated by calcium or magnesium. Interacts with tubulin-related protein FtsZ.

It is found in the cytoplasm. The protein localises to the nucleoid. Plays a central role in chromosome condensation, segregation and cell cycle progression. Functions as a homodimer, which is essential for chromosome partition. Involved in negative DNA supercoiling in vivo, and by this means organize and compact chromosomes. May achieve or facilitate chromosome segregation by condensation DNA from both sides of a centrally located replisome during cell division. This chain is Chromosome partition protein MukB, found in Shigella boydii serotype 4 (strain Sb227).